Consider the following 378-residue polypeptide: Queuine tRNA-ribosyltransferase (378 aa).

Catalysis depends on aspartate 89, which acts as the Proton acceptor. Substrate contacts are provided by residues aspartate 89–phenylalanine 93, aspartate 143, glutamine 194, and glycine 221. Residues glycine 252–asparagine 258 form an RNA binding region. The active-site Nucleophile is aspartate 271. Residues alanine 276–arginine 280 are RNA binding; important for wobble base 34 recognition. Cysteine 309, cysteine 311, cysteine 314, and histidine 340 together coordinate Zn(2+).

This sequence belongs to the queuine tRNA-ribosyltransferase family. As to quaternary structure, homodimer. Within each dimer, one monomer is responsible for RNA recognition and catalysis, while the other monomer binds to the replacement base PreQ1. Requires Zn(2+) as cofactor.

The enzyme catalyses 7-aminomethyl-7-carbaguanine + guanosine(34) in tRNA = 7-aminomethyl-7-carbaguanosine(34) in tRNA + guanine. It participates in tRNA modification; tRNA-queuosine biosynthesis. Its function is as follows. Catalyzes the base-exchange of a guanine (G) residue with the queuine precursor 7-aminomethyl-7-deazaguanine (PreQ1) at position 34 (anticodon wobble position) in tRNAs with GU(N) anticodons (tRNA-Asp, -Asn, -His and -Tyr). Catalysis occurs through a double-displacement mechanism. The nucleophile active site attacks the C1' of nucleotide 34 to detach the guanine base from the RNA, forming a covalent enzyme-RNA intermediate. The proton acceptor active site deprotonates the incoming PreQ1, allowing a nucleophilic attack on the C1' of the ribose to form the product. After dissociation, two additional enzymatic reactions on the tRNA convert PreQ1 to queuine (Q), resulting in the hypermodified nucleoside queuosine (7-(((4,5-cis-dihydroxy-2-cyclopenten-1-yl)amino)methyl)-7-deazaguanosine). The sequence is that of Queuine tRNA-ribosyltransferase from Lachnoclostridium phytofermentans (strain ATCC 700394 / DSM 18823 / ISDg) (Clostridium phytofermentans).